Reading from the N-terminus, the 201-residue chain is Acyl-homoserine-lactone synthase (201 aa).

This sequence belongs to the autoinducer synthase family.

The catalysed reaction is a fatty acyl-[ACP] + S-adenosyl-L-methionine = an N-acyl-L-homoserine lactone + S-methyl-5'-thioadenosine + holo-[ACP] + H(+). Its function is as follows. Required for the synthesis of PAI consisting of 3-oxo-N-(tetrahydro-2-oxo-3-furanyl)-dodecanamide also known as N-(3-oxododecanoyl)homoserine lactone, an autoinducer molecule which binds to LasR and thus acts in elastase biosynthesis regulation. This Pseudomonas aeruginosa (strain ATCC 15692 / DSM 22644 / CIP 104116 / JCM 14847 / LMG 12228 / 1C / PRS 101 / PAO1) protein is Acyl-homoserine-lactone synthase (lasI).